Here is a 129-residue protein sequence, read N- to C-terminus: Glycine cleavage system H protein (129 aa).

Positions 24 to 106 constitute a Lipoyl-binding domain; sequence TYTVGITEHA…YAGGWIFKIK (83 aa). Lys65 carries the post-translational modification N6-lipoyllysine.

This sequence belongs to the GcvH family. In terms of assembly, the glycine cleavage system is composed of four proteins: P, T, L and H. It depends on (R)-lipoate as a cofactor.

The glycine cleavage system catalyzes the degradation of glycine. The H protein shuttles the methylamine group of glycine from the P protein to the T protein. The polypeptide is Glycine cleavage system H protein (Escherichia coli O139:H28 (strain E24377A / ETEC)).